An 875-amino-acid chain; its full sequence is Alanine--tRNA ligase (875 aa).

Residues histidine 564, histidine 568, cysteine 666, and histidine 670 each coordinate Zn(2+).

The protein belongs to the class-II aminoacyl-tRNA synthetase family. In terms of assembly, homotetramer. Zn(2+) is required as a cofactor.

The protein localises to the cytoplasm. It catalyses the reaction tRNA(Ala) + L-alanine + ATP = L-alanyl-tRNA(Ala) + AMP + diphosphate. In terms of biological role, catalyzes the attachment of alanine to tRNA(Ala) in a two-step reaction: alanine is first activated by ATP to form Ala-AMP and then transferred to the acceptor end of tRNA(Ala). Also edits incorrectly charged Ser-tRNA(Ala) and Gly-tRNA(Ala) via its editing domain. This chain is Alanine--tRNA ligase, found in Klebsiella pneumoniae subsp. pneumoniae (strain ATCC 700721 / MGH 78578).